The primary structure comprises 498 residues: GTPase Der (498 aa).

2 consecutive EngA-type G domains span residues 3–166 (PVVA…FEEL) and 212–385 (IKFA…RSAT). GTP contacts are provided by residues 9–16 (GRPNVGKS), 56–60 (DTGGI), 118–121 (NKTD), 218–225 (GRPNVGKS), 265–269 (DTAGV), and 330–333 (NKWD). The region spanning 386 to 470 (KRISTSMLTR…PIHIEFQEGD (85 aa)) is the KH-like domain.

This sequence belongs to the TRAFAC class TrmE-Era-EngA-EngB-Septin-like GTPase superfamily. EngA (Der) GTPase family. As to quaternary structure, associates with the 50S ribosomal subunit.

In terms of biological role, GTPase that plays an essential role in the late steps of ribosome biogenesis. In Tolumonas auensis (strain DSM 9187 / NBRC 110442 / TA 4), this protein is GTPase Der.